Consider the following 1037-residue polypeptide: MAEDAHTEDLSTQTPQQEGLPERLRVHSLARVLGTTSRRVLDALAEFDGRQRSAHSTVDKADAERVRAALTESPAAETPPEEAPAAETPVADLVVVQAEQVEVVTVSEAGPAEPAEPAEPEAPAAEAEAEAETEVADEAETPEPTFRGAVLVGDEPESRLILEHANIPPARETQTERPDYLPLFVAPQPVSFEPAVVDDEDEDDDTETGAESDFDSGADSDSDDDQADRPRRRRRGRRGRGRGRGEQNDDATSDADTDSTEDQTDGDEQESGEDSDDSGDEDSTTTEGGTRRRRRRRRRKSGSGDSDDAVSPDDPPNTVVHERAPRTERSDKSDDSEIQGISGSTRLEAKRQRRRDGRDAGRRRPPILSEAEFLARREAVERTMIVRDKVRTEPPHEGARYTQIAVLEDGVVVEHFVTSAASASLVGNIYLGIVQNVLPSMEAAFVDIGRGRNGVLYAGEVNWEAAGLGGQNRKIEQALKPGDYVVVQVSKDPVGHKGARLTTQVSLAGRYLVYVPGASSTGISRKLPDTERQRLKEILREVVPSDAGVIIRTASEGVKEEDIRSDVERLQKRWSEIEAKAAEVTEKKAGAAVALYEEPDVLVKVIRDLFNEDFSSLIVSGDEAWNTINSYVEAVAPDLMPRLTKYEPAGPDAPDVFAVHRIDEQLAKAMDRKVWLPSGGTLVIDRTEAMTVVDVNTGKFTGSGGNLEQTVTRNNLEAAEEIVRQLRLRDIGGIVVIDFIDMVLESNRDLVLRRLTEALARDRTRHQVSEVTSLGLVQLTRKRLGTGLVEAFSTACTHCGGRGIVLHGDPIDSASSNGGRKSDSSGGGGSGGGRRGKRGKKGAARTEEVHVAKVPDHTPGEHPMFKAMAAANGKHEGDEDHEDHEDHETAEDTTAAEVRDDTRDEHDADERAHVVTAAVGAAGDEDLDDSDEDSDLDSDEESDDESDEDEIELDDDEDELDEDIEVIGDSDDSDDSDDSDEDDDSDDSDDDSDEDEDSDSDEDEEPVREVYEPPVTAPRARVRRRAAARPAGPPSHD.

Disordered regions lie at residues 1 to 23 (MAED…LPER), 47 to 90 (FDGR…ETPV), and 106 to 369 (VSEA…PILS). Residues 47–67 (FDGRQRSAHSTVDKADAERVR) show a composition bias toward basic and acidic residues. 2 stretches are compositionally biased toward low complexity: residues 68 to 90 (AALT…ETPV) and 106 to 126 (VSEA…PAAE). Acidic residues-rich tracts occupy residues 127 to 141 (AEAE…EAET) and 196 to 226 (VVDD…DDDQ). Over residues 230–242 (PRRRRRGRRGRGR) the composition is skewed to basic residues. Positions 248 to 284 (NDDATSDADTDSTEDQTDGDEQESGEDSDDSGDEDST) are enriched in acidic residues. Basic residues predominate over residues 291-301 (RRRRRRRRRKS). Basic and acidic residues predominate over residues 320–335 (VHERAPRTERSDKSDD). The region spanning 427-504 (GNIYLGIVQN…GHKGARLTTQ (78 aa)) is the S1 motif domain. Residues 561–589 (EDIRSDVERLQKRWSEIEAKAAEVTEKKA) adopt a coiled-coil conformation. 2 residues coordinate Mg(2+): aspartate 694 and aspartate 738. Zn(2+)-binding residues include cysteine 796 and cysteine 799. The tract at residues 810 to 1037 (PIDSASSNGG…ARPAGPPSHD (228 aa)) is disordered. Residues 834–843 (RRGKRGKKGA) are compositionally biased toward basic residues. The segment covering 844-864 (ARTEEVHVAKVPDHTPGEHPM) has biased composition (basic and acidic residues). Residues 879–891 (EDHEDHEDHETAE) show a composition bias toward acidic residues. The span at 897-913 (EVRDDTRDEHDADERAH) shows a compositional bias: basic and acidic residues. A compositionally biased stretch (acidic residues) spans 923 to 1006 (GDEDLDDSDE…DSDSDEDEEP (84 aa)).

It belongs to the RNase E/G family. As to quaternary structure, assembles into a homotetramer formed by a dimer of dimers. Interacts with DNA-binding protein HhupB. Mg(2+) serves as cofactor. Zn(2+) is required as a cofactor.

Its subcellular location is the cytoplasm. The enzyme catalyses Endonucleolytic cleavage of single-stranded RNA in A- and U-rich regions.. In terms of biological role, endoribonuclease that plays a central role in RNA processing and decay. Plays a major role in pre-16S rRNA maturation, probably generating the mature 5'-end, and a minor role in pre-5S and pre-23S rRNA maturation. Probably also processes tRNA. RNase E and HupB jointly contribute to cellular adaptation to changing growth conditions and survival during antibiotic treatment. Overexpression or depletion leads to changes in gene expression; overexpression induces metabolic slowdown and cell stress while depleted strains grow less well than induced strains. The sequence is that of Ribonuclease E (rne) from Mycolicibacterium smegmatis (strain ATCC 700084 / mc(2)155) (Mycobacterium smegmatis).